The chain runs to 103 residues: Integration host factor subunit beta (103 aa).

It belongs to the bacterial histone-like protein family. As to quaternary structure, heterodimer of an alpha and a beta chain.

In terms of biological role, this protein is one of the two subunits of integration host factor, a specific DNA-binding protein that functions in genetic recombination as well as in transcriptional and translational control. This chain is Integration host factor subunit beta, found in Bradyrhizobium sp. (strain BTAi1 / ATCC BAA-1182).